Reading from the N-terminus, the 194-residue chain is Probable GTP-binding protein EngB (194 aa).

Residues 22–194 (DLPEFALAGR…KFWDWIEDKM (173 aa)) form the EngB-type G domain. GTP-binding positions include 30-37 (GRSNVGKS), 57-61 (GKTQT), 75-78 (DVPG), 142-145 (TKMD), and 175-177 (FSS). Positions 37 and 59 each coordinate Mg(2+).

It belongs to the TRAFAC class TrmE-Era-EngA-EngB-Septin-like GTPase superfamily. EngB GTPase family. Mg(2+) serves as cofactor.

Its function is as follows. Necessary for normal cell division and for the maintenance of normal septation. This is Probable GTP-binding protein EngB from Lactobacillus gasseri (strain ATCC 33323 / DSM 20243 / BCRC 14619 / CIP 102991 / JCM 1131 / KCTC 3163 / NCIMB 11718 / NCTC 13722 / AM63).